Reading from the N-terminus, the 101-residue chain is Large ribosomal subunit protein uL24 (101 aa).

Belongs to the universal ribosomal protein uL24 family. Part of the 50S ribosomal subunit.

Its function is as follows. One of two assembly initiator proteins, it binds directly to the 5'-end of the 23S rRNA, where it nucleates assembly of the 50S subunit. In terms of biological role, one of the proteins that surrounds the polypeptide exit tunnel on the outside of the subunit. This chain is Large ribosomal subunit protein uL24, found in Ruegeria sp. (strain TM1040) (Silicibacter sp.).